A 513-amino-acid chain; its full sequence is Bone morphogenetic protein 6 (513 aa).

A signal peptide spans Met1–Ser20. Positions Cys21–Arg374 are excised as a propeptide. Disordered stretches follow at residues Ala38 to Phe66, Leu89 to Ser131, and Ala145 to Leu200. The segment covering Gly98 to Arg121 has biased composition (low complexity). The span at Gln158–Arg172 shows a compositional bias: polar residues. 5 N-linked (GlcNAc...) asparagine glycosylation sites follow: Asn241, Asn269, Asn386, Asn404, and Asn454. The disordered stretch occupies residues Thr373–Ser398. 3 disulfide bridges follow: Cys412–Cys478, Cys441–Cys510, and Cys445–Cys512.

It belongs to the TGF-beta family. As to quaternary structure, interacts with SOSTDC1. Interacts (when glycosylated) with type I receptor ACVR1; the interaction may induce HAMP expression. Interacts with type II receptor ACVR2B. Interacts with Hemojuvelin/HJV. Interacts with ERFE; the interaction inhibits BMP-induced transcription of HAMP. Interacts with BMPR1A/ALK3. Forms heterodimers with BMP2 in vitro; the heterodimer then binds to its receptor BMPR1A /ALK3 and may induce HAMP expression. In terms of processing, glycosylated at Asn-454. Glycosylation is crucial for recognition by the activin receptor type I/ACVR1.

It localises to the secreted. Growth factor of the TGF-beta superfamily that plays essential roles in many developmental processes including cartilage and bone formation. Also plays an important role in the regulation of HAMP/hepcidin expression and iron metabolism by acting as a ligand for hemojuvelin/HJV. Also acts to promote expression of HAMP, potentially via the interaction with its receptor BMPR1A/ALK3. Initiates the canonical BMP signaling cascade by associating with type I receptor ACVR1 and type II receptor ACVR2B. In turn, ACVR1 propagates signal by phosphorylating SMAD1/5/8 that travel to the nucleus and act as activators and repressors of transcription of target. Can also signal through non-canonical pathway such as TAZ-Hippo signaling cascade to modulate VEGF signaling by regulating VEGFR2 expression. The sequence is that of Bone morphogenetic protein 6 (BMP6) from Homo sapiens (Human).